The following is a 592-amino-acid chain: Aspartate--tRNA ligase (592 aa).

An L-aspartate-binding site is contributed by glutamate 173. Residues 197-200 (QLFK) form an aspartate region. Arginine 219 lines the L-aspartate pocket. ATP-binding positions include 219-221 (RDE) and glutamine 228. An L-aspartate-binding site is contributed by histidine 449. ATP is bound at residue glutamate 483. An L-aspartate-binding site is contributed by arginine 490. 535–538 (GLDR) contributes to the ATP binding site.

It belongs to the class-II aminoacyl-tRNA synthetase family. Type 1 subfamily. Homodimer.

The protein resides in the cytoplasm. It catalyses the reaction tRNA(Asp) + L-aspartate + ATP = L-aspartyl-tRNA(Asp) + AMP + diphosphate. Functionally, catalyzes the attachment of L-aspartate to tRNA(Asp) in a two-step reaction: L-aspartate is first activated by ATP to form Asp-AMP and then transferred to the acceptor end of tRNA(Asp). The polypeptide is Aspartate--tRNA ligase (Shewanella loihica (strain ATCC BAA-1088 / PV-4)).